Here is a 173-residue protein sequence, read N- to C-terminus: Shikimate kinase 1 (173 aa).

An ATP-binding site is contributed by glycine 14–threonine 19. Serine 18 contacts Mg(2+). 3 residues coordinate substrate: aspartate 36, arginine 60, and glycine 82. Arginine 120 contacts ATP. Arginine 140 serves as a coordination point for substrate. Glutamine 157 contributes to the ATP binding site.

It belongs to the shikimate kinase family. Monomer. The cofactor is Mg(2+).

Its subcellular location is the cytoplasm. The catalysed reaction is shikimate + ATP = 3-phosphoshikimate + ADP + H(+). Its pathway is metabolic intermediate biosynthesis; chorismate biosynthesis; chorismate from D-erythrose 4-phosphate and phosphoenolpyruvate: step 5/7. Functionally, catalyzes the specific phosphorylation of the 3-hydroxyl group of shikimic acid using ATP as a cosubstrate. This is Shikimate kinase 1 from Serratia proteamaculans (strain 568).